We begin with the raw amino-acid sequence, 328 residues long: Testis-specific serine/threonine-protein kinase 4 (328 aa).

The Protein kinase domain maps to 25-293 (YEVGKAIGHG…ILDIIKDSWV (269 aa)). Residues 31–39 (IGHGSYGSV) and Lys54 contribute to the ATP site. The active-site Proton acceptor is Asp148. Thr197 carries the phosphothreonine modification.

The protein belongs to the protein kinase superfamily. CAMK Ser/Thr protein kinase family. In terms of assembly, homodimer. Interacts with HSP90; this interaction stabilizes and activates TSSK4. Interacts with ODF2 (via C-terminus); this interaction promotes ODF2 phosphorylation on 'Ser-95'. May interact with CREM. Interacts with CREB1; this interaction facilitates phosphorylation on 'Ser-133'. Interacts with QRICH2. Mg(2+) is required as a cofactor. Activated by autophosphorylation on Thr-197. ODF2 potentiates the autophosphorylation activity of TSSK4 at Thr-197. Post-translationally, ubiquitinated; HSP90 activity negatively regulates ubiquitination and degradation. In terms of tissue distribution, expressed only in the testis.

Its subcellular location is the cytoplasmic vesicle. The protein localises to the secretory vesicle. The protein resides in the acrosome. It is found in the cell projection. It localises to the cilium. Its subcellular location is the flagellum. It catalyses the reaction L-seryl-[protein] + ATP = O-phospho-L-seryl-[protein] + ADP + H(+). The enzyme catalyses L-threonyl-[protein] + ATP = O-phospho-L-threonyl-[protein] + ADP + H(+). Activated by phosphorylation on Thr-197. In terms of biological role, serine/threonine kinase which is involved in male germ cell development and in mature sperm function. May be involved in the Cre/Creb signaling pathway. Phosphorylates CREB1 on 'Ser-133' in vitro and can stimulate Cre/Creb pathway in cells. Phosphorylates CREM on 'Ser-116' in vitro. Phosphorylates ODF2 on 'Ser-95'. The protein is Testis-specific serine/threonine-protein kinase 4 of Homo sapiens (Human).